Here is a 342-residue protein sequence, read N- to C-terminus: Methylthioribose-1-phosphate isomerase (342 aa).

Residues 49–51, Arg-86, and Gln-187 each bind substrate; that span reads RGA. Asp-228 functions as the Proton donor in the catalytic mechanism. 238 to 239 contacts substrate; it reads NK.

The protein belongs to the eIF-2B alpha/beta/delta subunits family. MtnA subfamily.

The catalysed reaction is 5-(methylsulfanyl)-alpha-D-ribose 1-phosphate = 5-(methylsulfanyl)-D-ribulose 1-phosphate. Its pathway is amino-acid biosynthesis; L-methionine biosynthesis via salvage pathway; L-methionine from S-methyl-5-thio-alpha-D-ribose 1-phosphate: step 1/6. Its function is as follows. Catalyzes the interconversion of methylthioribose-1-phosphate (MTR-1-P) into methylthioribulose-1-phosphate (MTRu-1-P). This chain is Methylthioribose-1-phosphate isomerase, found in Enterobacter sp. (strain 638).